A 977-amino-acid chain; its full sequence is RNA-binding protein 15 (977 aa).

4 stretches are compositionally biased toward basic and acidic residues: residues Met1–Pro10, Arg35–Pro52, Arg59–Lys72, and Leu98–Asp113. The disordered stretch occupies residues Met1–Ala167. Ser109 is modified (phosphoserine). The segment covering Ser119–Ser130 has biased composition (low complexity). Residues Ser135–Glu150 are compositionally biased toward gly residues. Positions Ser151–Ala160 are enriched in low complexity. The RRM 1 domain maps to Lys170–Val252. A phosphoserine mark is found at Ser179, Ser208, and Ser210. Lys246 is covalently cross-linked (Glycyl lysine isopeptide (Lys-Gly) (interchain with G-Cter in SUMO2)). Ser253, Ser257, and Ser259 each carry phosphoserine. The interval Arg256 to Ala298 is disordered. Tyr266 is modified (phosphotyrosine). 3 positions are modified to phosphoserine: Ser292, Ser294, and Ser365. 2 RRM domains span residues Arg374–Ala451 and Thr455–Thr529. Glycyl lysine isopeptide (Lys-Gly) (interchain with G-Cter in SUMO2) cross-links involve residues Lys406, Lys420, and Lys445. The residue at position 450 (Lys450) is an N6-acetyllysine. Composition is skewed to basic and acidic residues over residues His555–Tyr581 and Ser613–Arg661. The interval His555 to Ala778 is disordered. Position 568 is a phosphothreonine (Thr568). Arg578 bears the Asymmetric dimethylarginine; alternate; by PRMT1 mark. Arg578 is subject to Omega-N-methylarginine; alternate; by PRMT1. 6 positions are modified to phosphoserine: Ser622, Ser656, Ser670, Ser674, Ser700, and Ser741. 2 stretches are compositionally biased toward basic and acidic residues: residues Arg673–Asp728 and Ser741–Asp750. Lys744 participates in a covalent cross-link: Glycyl lysine isopeptide (Lys-Gly) (interchain with G-Cter in SUMO2). Polar residues predominate over residues Ser752–Asp771. Residues Ser765, Ser767, and Ser781 each carry the phosphoserine modification. An SPOC domain is found at Val777–Phe956. The disordered stretch occupies residues Gly865–Thr884. Low complexity predominate over residues Ser866–Thr884. Ser935 is modified (phosphoserine).

It belongs to the RRM Spen family. As to quaternary structure, component of the WMM complex, a N6-methyltransferase complex composed of a catalytic subcomplex, named MAC, and of an associated subcomplex, named MACOM. The MAC subcomplex is composed of METTL3 and METTL14. The MACOM subcomplex is composed of WTAP, ZC3H13, CBLL1/HAKAI, VIRMA, and, in some cases of RBM15 (RBM15 or RBM15B). Also a component of a MACOM-like complex, named WTAP complex, composed of WTAP, ZC3H13, CBLL1, VIRMA, RBM15, BCLAF1 and THRAP3. Interacts with RBPJ. Interacts (via SPOC domain) with SETD1B. Interacts with NXF1, the interaction is required to promote mRNA export. Interacts with SF3B1. (Microbial infection) Interacts with Epstein-Barr virus BSFL2/BMLF1. Methylated at Arg-578 by PRMT1, leading to promote ubiquitination by CNOT4 and subsequent degradation by the proteasome. Post-translationally, ubiquitinated by CNOT4 following methylation at Arg-578 by PRMT1.

It is found in the nucleus speckle. It localises to the nucleus. Its subcellular location is the nucleoplasm. The protein resides in the nucleus envelope. The protein localises to the nucleus membrane. In terms of biological role, RNA-binding protein that acts as a key regulator of N6-methyladenosine (m6A) methylation of RNAs, thereby regulating different processes, such as hematopoietic cell homeostasis, alternative splicing of mRNAs and X chromosome inactivation mediated by Xist RNA. Associated component of the WMM complex, a complex that mediates N6-methyladenosine (m6A) methylation of RNAs, a modification that plays a role in the efficiency of mRNA splicing and RNA processing. Plays a key role in m6A methylation, possibly by binding target RNAs and recruiting the WMM complex. Involved in random X inactivation mediated by Xist RNA: acts by binding Xist RNA and recruiting the WMM complex, which mediates m6A methylation, leading to target YTHDC1 reader on Xist RNA and promoting transcription repression activity of Xist. Required for the development of multiple tissues, such as the maintenance of the homeostasis of long-term hematopoietic stem cells and for megakaryocyte (MK) and B-cell differentiation. Regulates megakaryocyte differentiation by regulating alternative splicing of genes important for megakaryocyte differentiation; probably regulates alternative splicing via m6A regulation. Required for placental vascular branching morphogenesis and embryonic development of the heart and spleen. Acts as a regulator of thrombopoietin response in hematopoietic stem cells by regulating alternative splicing of MPL. May also function as an mRNA export factor, stimulating export and expression of RTE-containing mRNAs which are present in many retrotransposons that require to be exported prior to splicing. High affinity binding of pre-mRNA to RBM15 may allow targeting of the mRNP to the export helicase DBP5 in a manner that is independent of splicing-mediated NXF1 deposition, resulting in export prior to splicing. May be implicated in HOX gene regulation. This Homo sapiens (Human) protein is RNA-binding protein 15.